The chain runs to 164 residues: UPF0262 protein Xaut_1232 (164 aa).

This sequence belongs to the UPF0262 family.

The polypeptide is UPF0262 protein Xaut_1232 (Xanthobacter autotrophicus (strain ATCC BAA-1158 / Py2)).